The sequence spans 387 residues: Acetylajmalan esterase (387 aa).

The first 22 residues, 1–22 (MGFARLLHLVFSLLVFAGITNG), serve as a signal peptide directing secretion. Ser-36 (nucleophile) is an active-site residue. 5 N-linked (GlcNAc...) asparagine glycosylation sites follow: Asn-98, Asn-180, Asn-199, Asn-249, and Asn-296. Active-site residues include Asp-337 and His-340.

Belongs to the 'GDSL' lipolytic enzyme family.

It carries out the reaction 17-O-acetylajmaline + H2O = ajmaline + acetate + H(+). The catalysed reaction is 17-O-acetylnorajmaline + H2O = norajmaline + acetate + H(+). It functions in the pathway alkaloid biosynthesis; ajmaline biosynthesis. Its function is as follows. Acetylesterase involved in the biosynthesis of ajmaline-type monoterpenoid indole alkaloids (MIAs) natural products, important plant-derived pharmaceuticals used in the therapy of heart disorders. Deacetylates 17-O-acetylajmaline and 17-O-acetylnorajmaline to produce ajmaline and norajmaline, but is inactive toward other acetylated alkaloids. The chain is Acetylajmalan esterase from Rauvolfia serpentina (Serpentine wood).